Reading from the N-terminus, the 259-residue chain is MKDVQNEKDPRMVPLKKVGIKDLHWPLKVILKEDGYQSTVAQISCSVDLHREKRGIHMSRFIEVLNKLEVITPQIFEEILDDLIEIMEAKRAHLEIHFPYFTWKESPVSRKKSPLKVDCFVEAEKEKNFSFKIGVRTPVHTLCPCSKEISDYGAHNQRAFVEITVKTRKFIWFEDLVEIAEKNASSPLYTLLKRPDEKFVTEKAYENPRFVEDVARDVALKLEKDPRITWYRVYVESMESIHNHNAFACVEKGDFVLEG.

The protein belongs to the GTP cyclohydrolase IV family.

It catalyses the reaction GTP + H2O = 7,8-dihydroneopterin 3'-triphosphate + formate + H(+). Its pathway is cofactor biosynthesis; 7,8-dihydroneopterin triphosphate biosynthesis; 7,8-dihydroneopterin triphosphate from GTP: step 1/1. Functionally, converts GTP to 7,8-dihydroneopterin triphosphate. This chain is GTP cyclohydrolase FolE2, found in Thermotoga petrophila (strain ATCC BAA-488 / DSM 13995 / JCM 10881 / RKU-1).